The chain runs to 361 residues: dTDP-glucose 4,6-dehydratase (361 aa).

Residues 11-12, 32-35, 58-59, 80-84, and Thr99 each bind NAD(+); these read FI, DKLT, DI, and LAAES. Ser84 contributes to the substrate binding site. Thr133 is a substrate binding site. The Proton donor role is filled by Asp134. Catalysis depends on proton acceptor residues Glu135 and Tyr167. 167–171 serves as a coordination point for NAD(+); the sequence is YSASK. Asn196 is a binding site for substrate. Position 197 (Asn197) interacts with NAD(+). Substrate-binding positions include 206 to 207, 222 to 224, Arg231, Asn266, and 296 to 300; these read KL, PIY, and DRPGH.

This sequence belongs to the NAD(P)-dependent epimerase/dehydratase family. dTDP-glucose dehydratase subfamily. As to quaternary structure, homodimer. The cofactor is NAD(+).

The enzyme catalyses dTDP-alpha-D-glucose = dTDP-4-dehydro-6-deoxy-alpha-D-glucose + H2O. It participates in carbohydrate biosynthesis; dTDP-L-rhamnose biosynthesis. The protein operates within bacterial outer membrane biogenesis; LPS O-antigen biosynthesis. In terms of biological role, catalyzes the dehydration of dTDP-D-glucose to form dTDP-6-deoxy-D-xylo-4-hexulose via a three-step process involving oxidation, dehydration and reduction. The sequence is that of dTDP-glucose 4,6-dehydratase (rfbB) from Shigella flexneri.